A 1414-amino-acid chain; its full sequence is DNA-directed RNA polymerase subunit beta' (1414 aa).

Residues Cys70, Cys72, Cys85, and Cys88 each coordinate Zn(2+). 3 residues coordinate Mg(2+): Asp460, Asp462, and Asp464. Zn(2+) contacts are provided by Cys815, Cys889, Cys896, and Cys899. Residues 1395 to 1414 (EAEAQFADVSSTPDSDTDAS) are disordered.

The protein belongs to the RNA polymerase beta' chain family. In terms of assembly, the RNAP catalytic core consists of 2 alpha, 1 beta, 1 beta' and 1 omega subunit. When a sigma factor is associated with the core the holoenzyme is formed, which can initiate transcription. Mg(2+) serves as cofactor. It depends on Zn(2+) as a cofactor.

It carries out the reaction RNA(n) + a ribonucleoside 5'-triphosphate = RNA(n+1) + diphosphate. Functionally, DNA-dependent RNA polymerase catalyzes the transcription of DNA into RNA using the four ribonucleoside triphosphates as substrates. In Janthinobacterium sp. (strain Marseille) (Minibacterium massiliensis), this protein is DNA-directed RNA polymerase subunit beta'.